The sequence spans 526 residues: Rho guanine nucleotide exchange factor 3 (526 aa).

The interval 20–40 is disordered; that stretch reads ELPPASGPAKDAEEPSNKRVK. Phosphoserine occurs at positions 47 and 70. A DH domain is found at 122–304; the sequence is KRQEAIFELS…QGIVAEINTK (183 aa). A PH domain is found at 291–449; sequence INIIQGIVAE…WLNCIRQAKE (159 aa). Disordered regions lie at residues 464–502 and 507–526; these read EGSF…TSEV and EHME…ESNV. Residues 466-475 are compositionally biased toward polar residues; it reads SFLNPTTGSR.

Interacts with RHOA and RHOB.

It is found in the cytoplasm. Its function is as follows. Acts as a guanine nucleotide exchange factor (GEF) for RhoA and RhoB GTPases. This Macaca fascicularis (Crab-eating macaque) protein is Rho guanine nucleotide exchange factor 3 (ARHGEF3).